Here is a 447-residue protein sequence, read N- to C-terminus: Glutamyl-tRNA reductase (447 aa).

Residues 45-48 (TCNR), Ser111, 116-118 (ETE), and Gln122 each bind substrate. The active-site Nucleophile is the Cys46. Position 191-196 (191-196 (GTGKYA)) interacts with NADP(+).

It belongs to the glutamyl-tRNA reductase family. As to quaternary structure, homodimer.

It catalyses the reaction (S)-4-amino-5-oxopentanoate + tRNA(Glu) + NADP(+) = L-glutamyl-tRNA(Glu) + NADPH + H(+). Its pathway is porphyrin-containing compound metabolism; protoporphyrin-IX biosynthesis; 5-aminolevulinate from L-glutamyl-tRNA(Glu): step 1/2. Functionally, catalyzes the NADPH-dependent reduction of glutamyl-tRNA(Glu) to glutamate 1-semialdehyde (GSA). In Tropheryma whipplei (strain Twist) (Whipple's bacillus), this protein is Glutamyl-tRNA reductase.